A 303-amino-acid polypeptide reads, in one-letter code: GPN-loop GTPase 2 (303 aa).

29 to 34 is a GTP binding site; the sequence is GSGKST. The Gly-Pro-Asn (GPN)-loop; involved in dimer interface signature appears at 85–87; sequence GPN. GTP is bound at residue 187 to 190; sequence SKMD.

Belongs to the GPN-loop GTPase family. Heterodimers with gpn1 or gpn3. Binds to RNA polymerase II (RNAPII).

Small GTPase required for proper localization of RNA polymerase II and III (RNAPII and RNAPIII). May act at an RNAP assembly step prior to nuclear import. The protein is GPN-loop GTPase 2 of Xenopus tropicalis (Western clawed frog).